The primary structure comprises 111 residues: Distal membrane-arm assembly complex protein 1 (111 aa).

Over residues 1–11 (MGSSFSGSTEF) the composition is skewed to polar residues. The segment at 1–40 (MGSSFSGSTEFSAPAPPTVSTAVPANPPAKSAVPASPARD) is disordered. A compositionally biased stretch (low complexity) spans 18–38 (TVSTAVPANPPAKSAVPASPA). 2 helical membrane-spanning segments follow: residues 51–68 (VLSG…YLVA) and 81–101 (GTVL…VVLV).

Interacts with incompletely assembled mitochondrial NADH:ubiquinone oxidoreductase complex (complex I).

It is found in the mitochondrion inner membrane. Its function is as follows. Required for the assembly of the mitochondrial NADH:ubiquinone oxidoreductase complex (complex I). Involved in the assembly of the distal region of complex I. In Mus musculus (Mouse), this protein is Distal membrane-arm assembly complex protein 1.